A 446-amino-acid chain; its full sequence is Tubulin beta chain (446 aa).

Residues Gln11, Glu69, Ser138, Gly142, Thr143, Gly144, Asn204, and Asn226 each contribute to the GTP site. Glu69 is a Mg(2+) binding site. The interval 422 to 446 (YQQYQDAGIDEEEEEYEEELPEGEE) is disordered. A compositionally biased stretch (acidic residues) spans 429–446 (GIDEEEEEYEEELPEGEE).

It belongs to the tubulin family. Dimer of alpha and beta chains. A typical microtubule is a hollow water-filled tube with an outer diameter of 25 nm and an inner diameter of 15 nM. Alpha-beta heterodimers associate head-to-tail to form protofilaments running lengthwise along the microtubule wall with the beta-tubulin subunit facing the microtubule plus end conferring a structural polarity. Microtubules usually have 13 protofilaments but different protofilament numbers can be found in some organisms and specialized cells. Mg(2+) serves as cofactor.

The protein resides in the cytoplasm. It is found in the cytoskeleton. Its function is as follows. Tubulin is the major constituent of microtubules, a cylinder consisting of laterally associated linear protofilaments composed of alpha- and beta-tubulin heterodimers. Microtubules grow by the addition of GTP-tubulin dimers to the microtubule end, where a stabilizing cap forms. Below the cap, tubulin dimers are in GDP-bound state, owing to GTPase activity of alpha-tubulin. In Gibberella zeae (strain ATCC MYA-4620 / CBS 123657 / FGSC 9075 / NRRL 31084 / PH-1) (Wheat head blight fungus), this protein is Tubulin beta chain (TUB2).